The primary structure comprises 380 residues: Chorismate synthase (380 aa).

NADP(+)-binding residues include Arg-40 and Arg-46. FMN contacts are provided by residues Arg-128 to Ser-130, Gln-247 to Ala-248, Gly-292, Lys-307 to Thr-311, and Arg-333.

This sequence belongs to the chorismate synthase family. As to quaternary structure, homotetramer. FMNH2 serves as cofactor.

The catalysed reaction is 5-O-(1-carboxyvinyl)-3-phosphoshikimate = chorismate + phosphate. It functions in the pathway metabolic intermediate biosynthesis; chorismate biosynthesis; chorismate from D-erythrose 4-phosphate and phosphoenolpyruvate: step 7/7. Functionally, catalyzes the anti-1,4-elimination of the C-3 phosphate and the C-6 proR hydrogen from 5-enolpyruvylshikimate-3-phosphate (EPSP) to yield chorismate, which is the branch point compound that serves as the starting substrate for the three terminal pathways of aromatic amino acid biosynthesis. This reaction introduces a second double bond into the aromatic ring system. This is Chorismate synthase from Alkaliphilus metalliredigens (strain QYMF).